The chain runs to 74 residues: Sec-independent protein translocase protein TatA (74 aa).

The helical transmembrane segment at 1–21 threads the bilayer; sequence MGGISIWQLLIIVAIIVLLFG. The tract at residues 51-74 is disordered; it reads ANFDKVEAKESTSTTEKTKEKEQA.

This sequence belongs to the TatA/E family. The Tat system comprises two distinct complexes: a TatABC complex, containing multiple copies of TatA, TatB and TatC subunits, and a separate TatA complex, containing only TatA subunits. Substrates initially bind to the TatABC complex, which probably triggers association of the separate TatA complex to form the active translocon.

Its subcellular location is the cell inner membrane. Part of the twin-arginine translocation (Tat) system that transports large folded proteins containing a characteristic twin-arginine motif in their signal peptide across membranes. TatA could form the protein-conducting channel of the Tat system. The sequence is that of Sec-independent protein translocase protein TatA from Haemophilus ducreyi (strain 35000HP / ATCC 700724).